The chain runs to 107 residues: Universal stress protein B homolog (107 aa).

2 helical membrane-spanning segments follow: residues 6-26 (TILF…LTAL) and 86-106 (VREL…AAFI).

It belongs to the universal stress protein B family.

It is found in the cell inner membrane. In Vibrio parahaemolyticus serotype O3:K6 (strain RIMD 2210633), this protein is Universal stress protein B homolog.